Here is a 265-residue protein sequence, read N- to C-terminus: Dehydrogenase RED2 (265 aa).

A helical transmembrane segment spans residues 6 to 26 (SFLLSKLFLCIALCTAYVAFS). The N-linked (GlcNAc...) asparagine glycan is linked to Asn-45. The helical transmembrane segment at 47–67 (TSTVFGLTIVAIGLSALSSWL) threads the bilayer. Residue Asn-74 is glycosylated (N-linked (GlcNAc...) asparagine). Residue Val-89 participates in NADP(+) binding. A glycan (N-linked (GlcNAc...) asparagine) is linked at Asn-127. Positions 136 and 163 each coordinate NADP(+). Asn-176 carries N-linked (GlcNAc...) asparagine glycosylation. Ser-216 acts as the Proton donor in catalysis. Residues Tyr-228 and Lys-232 each coordinate NADP(+). The Proton acceptor role is filled by Tyr-228. The active-site Lowers pKa of active site Tyr is Lys-232.

Belongs to the short-chain dehydrogenases/reductases (SDR) family.

The protein resides in the membrane. The enzyme catalyses a primary alcohol + NAD(+) = an aldehyde + NADH + H(+). It catalyses the reaction a secondary alcohol + NAD(+) = a ketone + NADH + H(+). The protein operates within mycotoxin biosynthesis. Its function is as follows. Dehydrogenase; part of the Tox1B locus, one of the 2 loci that mediate the biosynthesis of T-toxin, a family of linear polyketides 37 to 45 carbons in length, of which the major component is 41 carbons, and which leads to high virulence to maize. One of the PKSs (PKS1 or PKS2) could synthesize a precursor, used subsequently by the other PKS as starter unit, to add additional carbons. Variability in the length of the final carbon backbone C35-47 could be achieved by varying the number of condensation cycles, or use of different starter or extender units or might be due to decarboxylation of the penultimate product, catalyzed by DEC1. Additional proteins are required for the biosynthesis of T-toxin, including oxidoreductases RED1, RED2, RED3, LAM1 and OXI1, as well as esterase TOX9. In Cochliobolus heterostrophus (strain C4 / ATCC 48331 / race T) (Southern corn leaf blight fungus), this protein is Dehydrogenase RED2.